The primary structure comprises 121 residues: MIQQESFLTVADNSGAKRIQCIRVLGSNRRYAHVGDIIVAAVKDAMPNMSVKKSEVVKAVVVRTKATLRRETGNSIRFDDNAAVLINEDKNPRGTRVFGPVARELRERNFTKIVSLAPEVI.

The protein belongs to the universal ribosomal protein uL14 family. As to quaternary structure, part of the 50S ribosomal subunit. Forms a cluster with proteins L3 and L19. In the 70S ribosome, L14 and L19 interact and together make contacts with the 16S rRNA in bridges B5 and B8.

Functionally, binds to 23S rRNA. Forms part of two intersubunit bridges in the 70S ribosome. The chain is Large ribosomal subunit protein uL14 from Prochlorococcus marinus (strain MIT 9303).